A 291-amino-acid chain; its full sequence is Protein/nucleic acid deglycase HchA (291 aa).

Residues 1–18 (MSNERDTSRTPTPDHAEH) show a composition bias toward basic and acidic residues. Positions 1 to 24 (MSNERDTSRTPTPDHAEHNAFFPS) are disordered. Catalysis depends on cysteine 188, which acts as the Nucleophile.

The protein belongs to the peptidase C56 family. HchA subfamily.

The protein localises to the cytoplasm. It carries out the reaction N(omega)-(1-hydroxy-2-oxopropyl)-L-arginyl-[protein] + H2O = lactate + L-arginyl-[protein] + H(+). It catalyses the reaction N(6)-(1-hydroxy-2-oxopropyl)-L-lysyl-[protein] + H2O = lactate + L-lysyl-[protein] + H(+). The catalysed reaction is S-(1-hydroxy-2-oxopropyl)-L-cysteinyl-[protein] + H2O = lactate + L-cysteinyl-[protein] + H(+). The enzyme catalyses N(omega)-(1-hydroxy-2-oxoethyl)-L-arginyl-[protein] + H2O = L-arginyl-[protein] + glycolate + H(+). It carries out the reaction N(6)-(1-hydroxy-2-oxoethyl)-L-lysyl-[protein] + H2O = glycolate + L-lysyl-[protein] + H(+). It catalyses the reaction S-(1-hydroxy-2-oxoethyl)-L-cysteinyl-[protein] + H2O = glycolate + L-cysteinyl-[protein] + H(+). The catalysed reaction is N(2)-(1-hydroxy-2-oxopropyl)-dGTP + H2O = lactate + dGTP + H(+). The enzyme catalyses N(2)-(1-hydroxy-2-oxopropyl)-GTP + H2O = lactate + GTP + H(+). It carries out the reaction N(2)-(1-hydroxy-2-oxopropyl)-GDP + H2O = lactate + GDP + H(+). It catalyses the reaction N(2)-(1-hydroxy-2-oxopropyl)-GMP + H2O = lactate + GMP + H(+). The catalysed reaction is N(2)-(1-hydroxy-2-oxoethyl)-dGTP + H2O = dGTP + glycolate + H(+). The enzyme catalyses N(2)-(1-hydroxy-2-oxoethyl)-GTP + H2O = glycolate + GTP + H(+). It carries out the reaction N(2)-(1-hydroxy-2-oxoethyl)-GDP + H2O = glycolate + GDP + H(+). It catalyses the reaction N(2)-(1-hydroxy-2-oxoethyl)-GMP + H2O = glycolate + GMP + H(+). The catalysed reaction is an N(2)-(1-hydroxy-2-oxopropyl)-guanosine in RNA + H2O = a guanosine in RNA + lactate + H(+). The enzyme catalyses an N(2)-(1-hydroxy-2-oxopropyl)-2'-deoxyguanosine in DNA + H2O = a 2'-deoxyguanosine in DNA + lactate + H(+). It carries out the reaction an N(2)-(1-hydroxy-2-oxoethyl)-guanosine in RNA + H2O = a guanosine in RNA + glycolate + H(+). It catalyses the reaction an N(2)-(1-hydroxy-2-oxoethyl)-2'-deoxyguanosine in DNA + H2O = a 2'-deoxyguanosine in DNA + glycolate + H(+). Its function is as follows. Protein and nucleotide deglycase that catalyzes the deglycation of the Maillard adducts formed between amino groups of proteins or nucleotides and reactive carbonyl groups of glyoxals. Thus, functions as a protein deglycase that repairs methylglyoxal- and glyoxal-glycated proteins, and releases repaired proteins and lactate or glycolate, respectively. Deglycates cysteine, arginine and lysine residues in proteins, and thus reactivates these proteins by reversing glycation by glyoxals. Acts on early glycation intermediates (hemithioacetals and aminocarbinols), preventing the formation of Schiff bases and advanced glycation endproducts (AGE). Also functions as a nucleotide deglycase able to repair glycated guanine in the free nucleotide pool (GTP, GDP, GMP, dGTP) and in DNA and RNA. Is thus involved in a major nucleotide repair system named guanine glycation repair (GG repair), dedicated to reversing methylglyoxal and glyoxal damage via nucleotide sanitization and direct nucleic acid repair. Plays an important role in protecting cells from carbonyl stress. The protein is Protein/nucleic acid deglycase HchA of Pseudomonas aeruginosa (strain UCBPP-PA14).